The following is an 89-amino-acid chain: Large ribosomal subunit protein bL27 (89 aa).

The segment at 1-21 is disordered; the sequence is MAHKKSGGSSRNGRDSNPKYL.

This sequence belongs to the bacterial ribosomal protein bL27 family.

The sequence is that of Large ribosomal subunit protein bL27 from Hyphomonas neptunium (strain ATCC 15444).